A 199-amino-acid chain; its full sequence is Guanylate kinase (199 aa).

One can recognise a Guanylate kinase-like domain in the interval Gly-20–Phe-198. Gly-27–Gly-34 is an ATP binding site.

Belongs to the guanylate kinase family.

It localises to the cytoplasm. The enzyme catalyses GMP + ATP = GDP + ADP. Functionally, essential for recycling GMP and indirectly, cGMP. The chain is Guanylate kinase from Trichormus variabilis (strain ATCC 29413 / PCC 7937) (Anabaena variabilis).